An 82-amino-acid polypeptide reads, in one-letter code: Small ribosomal subunit protein bS16 (82 aa).

The protein belongs to the bacterial ribosomal protein bS16 family.

This chain is Small ribosomal subunit protein bS16, found in Microcystis aeruginosa (strain NIES-843 / IAM M-2473).